The primary structure comprises 293 residues: Probable 2-(5''-triphosphoribosyl)-3'-dephosphocoenzyme-A synthase (293 aa).

The protein belongs to the CitG/MdcB family.

It catalyses the reaction 3'-dephospho-CoA + ATP = 2'-(5''-triphospho-alpha-D-ribosyl)-3'-dephospho-CoA + adenine. Its function is as follows. Involved in the formation of 2-(5''-phosphoribosyl)-3'-dephosphocoenzyme-A, the prosthetic group of the acyl-carrier protein of the malonate decarboxylase. The chain is Probable 2-(5''-triphosphoribosyl)-3'-dephosphocoenzyme-A synthase from Pseudomonas aeruginosa (strain UCBPP-PA14).